The primary structure comprises 519 residues: Laccase-2 (519 aa).

The first 20 residues, 1-20 (MGLQRFSFFVTLALVARSLA), serve as a signal peptide directing secretion. 2 Plastocyanin-like domains span residues 22–147 (IGPV…FVVY) and 159–301 (VDNE…ILRY). N-linked (GlcNAc...) asparagine glycosylation occurs at Asn-74. 4 residues coordinate Cu cation: His-84, His-86, His-129, and His-131. 2 disulfide bridges follow: Cys-105/Cys-508 and Cys-137/Cys-225. N-linked (GlcNAc...) asparagine glycans are attached at residues Asn-161, Asn-228, Asn-237, Asn-271, Asn-353, and Asn-361. Residues 368 to 490 (TVPVLLQILS…AGFAIVFAED (123 aa)) enclose the Plastocyanin-like 3 domain. His-415, His-418, His-420, His-472, Cys-473, His-474, and His-478 together coordinate Cu cation.

This sequence belongs to the multicopper oxidase family. As to quaternary structure, homodimer. Cu cation is required as a cofactor.

Its subcellular location is the secreted. The catalysed reaction is 4 hydroquinone + O2 = 4 benzosemiquinone + 2 H2O. In terms of biological role, lignin degradation and detoxification of lignin-derived products. This Trametes villosa (White-rot fungus) protein is Laccase-2.